The primary structure comprises 25 residues: Phospholipase A1 verutoxin-2a (25 aa).

The protein belongs to the AB hydrolase superfamily. Lipase family. Contains six disulfide bonds. As to expression, expressed by the venom gland.

Its subcellular location is the secreted. It catalyses the reaction a 1,2-diacyl-sn-glycero-3-phosphocholine + H2O = a 2-acyl-sn-glycero-3-phosphocholine + a fatty acid + H(+). The catalysed reaction is 1-(9Z-octadecenoyl)-2-hexadecanoyl-sn-glycero-3-phosphocholine + H2O = 2-hexadecanoyl-sn-glycero-3-phosphocholine + (9Z)-octadecenoate + H(+). The enzyme catalyses a 1-acyl-sn-glycero-3-phosphocholine + H2O = sn-glycerol 3-phosphocholine + a fatty acid + H(+). The protein operates within phospholipid metabolism. Activity is maximal in the presence of calcium. However, unlike phospholipases A2 whose catalytic activity is strictly calcium-dependent, this enzyme shows considerable catalytic activity on phosphatidylcholine emulsified in calcium free solution; the catalytic activity of VT-2a assayed in the absence of calcium ions is 18-20% of that assayed in solution containing calcium ions. Its function is as follows. Catalyzes the hydrolysis of glycerophospholipids such as phosphatidylcholine (1,2-diacyl-sn-glycero-3-phosphocholine) and has a moderate activity to hydrolyze lysoglycerophospholipids such as lysophosphatidylcholine (1-acyl-sn-glycero-3-phosphocholine), but is unable to hydrolyze sphingomyelin. In addition to acting as an allergen, it possesses a potent hemolytic activity on red blood cells of mice (98.8% of hemolysis at 3.0 ug/ml). This is Phospholipase A1 verutoxin-2a from Vespa velutina (Asian yellow-legged hornet).